The following is a 283-amino-acid chain: NAD kinase (283 aa).

Asp68 serves as the catalytic Proton acceptor. NAD(+)-binding positions include 68-69 (DG), 142-143 (ND), Arg153, Asp172, 183-188 (TAYSLS), and Gln242.

Belongs to the NAD kinase family. A divalent metal cation serves as cofactor.

The protein resides in the cytoplasm. It catalyses the reaction NAD(+) + ATP = ADP + NADP(+) + H(+). Functionally, involved in the regulation of the intracellular balance of NAD and NADP, and is a key enzyme in the biosynthesis of NADP. Catalyzes specifically the phosphorylation on 2'-hydroxyl of the adenosine moiety of NAD to yield NADP. This is NAD kinase from Thermoanaerobacter pseudethanolicus (strain ATCC 33223 / 39E) (Clostridium thermohydrosulfuricum).